Reading from the N-terminus, the 129-residue chain is Antileukoproteinase (129 aa).

The first 22 residues, 1-22, serve as a signal peptide directing secretion; that stretch reads GRGLLPFVLLALGIXAPWAVEG. 2 consecutive WAP domains span residues 25-73 and 79-127; these read NALK…LNPV and VKVK…LTPV. 8 disulfides stabilise this stretch: Cys-32/Cys-61, Cys-40/Cys-65, Cys-48/Cys-60, Cys-54/Cys-69, Cys-86/Cys-115, Cys-93/Cys-119, Cys-102/Cys-114, and Cys-108/Cys-123. The interval 81–129 is elastase inhibitory domain; the sequence is VKPGKCPVVYGQCMMLNPPNHCKTDSQCLGDLKCCKSMCGKVCLTPVKA.

As to quaternary structure, interacts with GRN; interaction protects progranulin from proteolysis. In terms of tissue distribution, found in pregnant endometrium and myometrium, placenta, allantoic fluids, fetal cord blood, and fetal liver. Also found in uterus and lung.

Its subcellular location is the secreted. Its function is as follows. Acid-stable proteinase inhibitor with strong affinities for trypsin, chymotrypsin, elastase, and cathepsin G. Modulates the inflammatory and immune responses after bacterial infection, and after infection by the intracellular parasite L.major. Down-regulates responses to bacterial lipopolysaccharide (LPS). Plays a role in regulating the activation of NF-kappa-B and inflammatory responses. Has antimicrobial activity against mycobacteria, but not against salmonella. Contributes to normal resistance against infection by M.tuberculosis. Required for normal resistance to infection by L.major. Required for normal wound healing, probably by preventing tissue damage by limiting protease activity. Together with ELANE, required for normal differentiation and proliferation of bone marrow myeloid cells. This Sus scrofa (Pig) protein is Antileukoproteinase (SLPI).